Here is a 413-residue protein sequence, read N- to C-terminus: Multifunctional CCA protein (413 aa).

Positions 8 and 11 each coordinate ATP. Positions 8 and 11 each coordinate CTP. Mg(2+) is bound by residues aspartate 21 and aspartate 23. Positions 91, 143, and 146 each coordinate ATP. Residues arginine 91, arginine 143, and arginine 146 each contribute to the CTP site. Residues 232–333 form the HD domain; the sequence is TGVHVMMVVD…VRFFERSDAL (102 aa).

The protein belongs to the tRNA nucleotidyltransferase/poly(A) polymerase family. Bacterial CCA-adding enzyme type 1 subfamily. As to quaternary structure, monomer. Can also form homodimers and oligomers. Mg(2+) is required as a cofactor. The cofactor is Ni(2+).

The enzyme catalyses a tRNA precursor + 2 CTP + ATP = a tRNA with a 3' CCA end + 3 diphosphate. The catalysed reaction is a tRNA with a 3' CCA end + 2 CTP + ATP = a tRNA with a 3' CCACCA end + 3 diphosphate. Its function is as follows. Catalyzes the addition and repair of the essential 3'-terminal CCA sequence in tRNAs without using a nucleic acid template. Adds these three nucleotides in the order of C, C, and A to the tRNA nucleotide-73, using CTP and ATP as substrates and producing inorganic pyrophosphate. tRNA 3'-terminal CCA addition is required both for tRNA processing and repair. Also involved in tRNA surveillance by mediating tandem CCA addition to generate a CCACCA at the 3' terminus of unstable tRNAs. While stable tRNAs receive only 3'-terminal CCA, unstable tRNAs are marked with CCACCA and rapidly degraded. The protein is Multifunctional CCA protein of Burkholderia ambifaria (strain ATCC BAA-244 / DSM 16087 / CCUG 44356 / LMG 19182 / AMMD) (Burkholderia cepacia (strain AMMD)).